A 754-amino-acid polypeptide reads, in one-letter code: Protein tyrosine phosphatase domain-containing protein 1 (754 aa).

One can recognise a Tyrosine-protein phosphatase domain in the interval 82 to 253 (YSSWVTDNIL…LTPLRNIFSC (172 aa)). C190 acts as the Phosphocysteine intermediate in catalysis. Phosphoserine is present on residues S392 and S394. A compositionally biased stretch (polar residues) spans 487-498 (SGAFSADVSGSH). Positions 487-554 (SGAFSADVSG…PRSPLDCGSS (68 aa)) are disordered. A Phosphoserine modification is found at S547.

This sequence belongs to the protein-tyrosine phosphatase family. Non-receptor class PTPDC1 subfamily.

Its function is as follows. May play roles in cilia formation and/or maintenance. The chain is Protein tyrosine phosphatase domain-containing protein 1 (PTPDC1) from Homo sapiens (Human).